Reading from the N-terminus, the 246-residue chain is NAD-dependent protein deacetylase (246 aa).

The Deacetylase sirtuin-type domain maps to M1–S246. NAD(+) is bound by residues A25, F36, R37, Q106, I108, D109, and H124. F36 is a binding site for nicotinamide. I108 and D109 together coordinate nicotinamide. The active-site Proton acceptor is H124. 4 residues coordinate Zn(2+): C132, C135, C152, and C155. 4 residues coordinate NAD(+): S193, S194, N216, and D233.

This sequence belongs to the sirtuin family. Class U subfamily. Zn(2+) is required as a cofactor.

Its subcellular location is the cytoplasm. The enzyme catalyses N(6)-acetyl-L-lysyl-[protein] + NAD(+) + H2O = 2''-O-acetyl-ADP-D-ribose + nicotinamide + L-lysyl-[protein]. In terms of biological role, NAD-dependent protein deacetylase which modulates the activities of several enzymes which are inactive in their acetylated form. The chain is NAD-dependent protein deacetylase from Staphylococcus epidermidis (strain ATCC 12228 / FDA PCI 1200).